The following is a 152-amino-acid chain: KTNKIVITNDKGRLSKEEIERMLAEAEKYKAEDEAEAARISAKNALESYAYSLRNTLSDSKVDEKLDAGDKQKLTAEIDKTVQWLDDNQTATKDEYESQQKELEGVANPIMMKFYGAGGEGGMPGGMPGGGMPGGAPGGAAGDDGPTVEEVD.

The span at 121 to 142 (GGMPGGMPGGGMPGGAPGGAAG) shows a compositional bias: gly residues. Positions 121-152 (GGMPGGMPGGGMPGGAPGGAAGDDGPTVEEVD) are disordered.

This sequence belongs to the heat shock protein 70 family.

This is Heat shock 70 kDa protein (HSP70) from Alternaria alternata (Alternaria rot fungus).